A 351-amino-acid chain; its full sequence is Glycerol-1-phosphate dehydrogenase [NAD(P)+] (351 aa).

Residues 97–101 (GKVID) and 119–122 (TSPS) contribute to the NAD(+) site. D124 serves as a coordination point for substrate. S128 is an NAD(+) binding site. D171 lines the substrate pocket. D171 and H251 together coordinate Zn(2+). H255 serves as a coordination point for substrate. H267 contributes to the Zn(2+) binding site.

The protein belongs to the glycerol-1-phosphate dehydrogenase family. As to quaternary structure, homodimer. Zn(2+) is required as a cofactor.

It is found in the cytoplasm. The catalysed reaction is sn-glycerol 1-phosphate + NAD(+) = dihydroxyacetone phosphate + NADH + H(+). It catalyses the reaction sn-glycerol 1-phosphate + NADP(+) = dihydroxyacetone phosphate + NADPH + H(+). It functions in the pathway membrane lipid metabolism; glycerophospholipid metabolism. Functionally, catalyzes the NAD(P)H-dependent reduction of dihydroxyacetonephosphate (DHAP or glycerone phosphate) to glycerol 1-phosphate (G1P). The G1P thus generated is used as the glycerophosphate backbone of phospholipids in the cellular membranes of Archaea. This is Glycerol-1-phosphate dehydrogenase [NAD(P)+] from Saccharolobus solfataricus (strain ATCC 35092 / DSM 1617 / JCM 11322 / P2) (Sulfolobus solfataricus).